The sequence spans 413 residues: MKGSNTFRWAIAIGVVVAAAAFWFWHSRSESPTAAPGVAAQAQHTAAAGRRGMRDGPLAPVQAATATTQAVPRYLSGLGTVTAANTVTVRSRVDGQLIALHFQEGQQVNAGDLLAQIDPSQFKVALAQAQGQLAKDNATLANARRDLARYQQLAKTNLVSRQELDAQQALVNETQGTIKADEANVASAQLQLDWSRITAPVSGRVGLKQVDVGNQISSSDTAGIVVITQTHPIDLIFTLPESDIATVVQAQKAGKTLVVEAWDRTNSHKLSEGVLLSLDNQIDPTTGTIKIKARFTNQDDTLFPNQFVNARMLVDTEQNAVVVPAAAVQMGNEGHFVWVLNDENNVSKKRVKIGIQDNRNVVISAGLSAGDRVVTDGIDRLTEGAKVEVVEPQTTMADEKSPSRHEGQKGARA.

An N-terminal signal peptide occupies residues 1-20 (MKGSNTFRWAIAIGVVVAAA). 2 disordered regions span residues 31 to 57 (SPTAAPGVAAQAQHTAAAGRRGMRDGP) and 391 to 413 (EPQTTMADEKSPSRHEGQKGARA). Over residues 32 to 49 (PTAAPGVAAQAQHTAAAG) the composition is skewed to low complexity. Positions 397–413 (ADEKSPSRHEGQKGARA) are enriched in basic and acidic residues.

This sequence belongs to the membrane fusion protein (MFP) (TC 8.A.1) family. Part of a tripartite efflux system composed of MdtA, MdtB and MdtC.

It localises to the cell inner membrane. The chain is Multidrug resistance protein MdtA from Salmonella typhi.